Here is a 399-residue protein sequence, read N- to C-terminus: Tyrosine--tRNA ligase (399 aa).

The 'HIGH' region signature appears at P42–H51. Positions K226–S230 match the 'KMSKS' region motif. Residue K229 participates in ATP binding. Residues M336 to L396 enclose the S4 RNA-binding domain.

Belongs to the class-I aminoacyl-tRNA synthetase family. TyrS type 2 subfamily. In terms of assembly, homodimer.

It is found in the cytoplasm. It catalyses the reaction tRNA(Tyr) + L-tyrosine + ATP = L-tyrosyl-tRNA(Tyr) + AMP + diphosphate + H(+). Catalyzes the attachment of tyrosine to tRNA(Tyr) in a two-step reaction: tyrosine is first activated by ATP to form Tyr-AMP and then transferred to the acceptor end of tRNA(Tyr). The chain is Tyrosine--tRNA ligase from Pseudomonas fluorescens (strain Pf0-1).